Reading from the N-terminus, the 729-residue chain is Heterogeneous nuclear ribonucleoprotein M (729 aa).

Low complexity predominate over residues Met1–Ala13. A disordered region spans residues Met1 to Asn65. Position 2 is an N-acetylalanine (Ala2). A Glycyl lysine isopeptide (Lys-Gly) (interchain with G-Cter in SUMO2) cross-link involves residue Lys17. Ser29 carries the post-translational modification Phosphoserine. Glycyl lysine isopeptide (Lys-Gly) (interchain with G-Cter in SUMO2) cross-links involve residues Lys37, Lys68, and Lys82. The segment covering Lys37 to Lys49 has biased composition (basic and acidic residues). 2 RRM domains span residues Tyr70–Asp148 and Ser203–Arg280. Ser85 is modified (phosphoserine). Glycyl lysine isopeptide (Lys-Gly) (interchain with G-Cter in SUMO2) cross-links involve residues Lys87 and Lys126. An N6-acetyllysine; alternate modification is found at Lys133. Residue Lys133 forms a Glycyl lysine isopeptide (Lys-Gly) (interchain with G-Cter in SUMO2); alternate linkage. Glycyl lysine isopeptide (Lys-Gly) (interchain with G-Cter in SUMO2) cross-links involve residues Lys142 and Lys144. At Ser203 the chain carries Phosphoserine. Residue Lys220 forms a Glycyl lysine isopeptide (Lys-Gly) (interchain with G-Cter in SUMO2) linkage. Lys276 carries the N6-acetyllysine; alternate modification. Residue Lys276 forms a Glycyl lysine isopeptide (Lys-Gly) (interchain with G-Cter in SUMO2); alternate linkage. Glycyl lysine isopeptide (Lys-Gly) (interchain with G-Cter in SUMO2) cross-links involve residues Lys284 and Lys344. Phosphoserine is present on residues Ser364 and Ser376. Glycyl lysine isopeptide (Lys-Gly) (interchain with G-Cter in SUMO2) cross-links involve residues Lys380 and Lys387. At Ser396 the chain carries Phosphoserine. A run of 4 repeats spans residues Gly399–Gly404, Gly406–Ser411, Gly414–Gly419, and Gly425–Gly430. Positions Gly399–Gly607 are 27 X 6 AA repeats of [GEVSTPAN]-[ILMV]-[DE]-[RH]-[MLVI]-[GAV]. Phosphoserine is present on Ser431. Repeat copies occupy residues Glu432–Gly437, Val439–Gly444, and Ser445–Gly450. The residue at position 451 (Ser451) is a Phosphoserine. A run of 4 repeats spans residues Ser452–Gly457, Gly460–Ala465, Ser467–Gly472, and Thr474–Gly479. Ser467 is subject to Phosphoserine. Ser480 bears the Phosphoserine mark. 16 repeat units span residues Gly481 to Gly486, Gly492 to Ala497, Pro499 to Gly504, Thr506 to Gly511, Gly513 to Gly518, Ala520 to Gly525, Ser527 to Val532, Ser539 to Gly544, Val546 to Ala551, Gly553 to Gly558, Asn561 to Gly566, Leu567 to Gly571, Ser574 to Gly579, Leu580 to Gly584, Ser587 to Gly592, and Gly602 to Gly607. An Omega-N-methylarginine modification is found at Arg495. Ser527 bears the Phosphoserine mark. At Ser574 the chain carries Phosphoserine. Ser587 carries the phosphoserine modification. Ser617, Ser632, and Ser636 each carry phosphoserine. Lys650 is covalently cross-linked (Glycyl lysine isopeptide (Lys-Gly) (interchain with G-Cter in SUMO2)). The RRM 3 domain maps to Cys652–Asn728. Thr664 carries the phosphothreonine modification. Lys666 participates in a covalent cross-link: Glycyl lysine isopeptide (Lys-Gly) (interchain with G-Cter in SUMO2). Lys671 carries the N6-acetyllysine modification. Glycyl lysine isopeptide (Lys-Gly) (interchain with G-Cter in SUMO2) cross-links involve residues Lys684 and Lys691. At Lys697 the chain carries N6-acetyllysine; alternate. Residue Lys697 forms a Glycyl lysine isopeptide (Lys-Gly) (interchain with G-Cter in SUMO2); alternate linkage. Lys697 is covalently cross-linked (Glycyl lysine isopeptide (Lys-Gly) (interchain with G-Cter in SUMO1); alternate). The residue at position 700 (Ser700) is a Phosphoserine. Lys715 participates in a covalent cross-link: Glycyl lysine isopeptide (Lys-Gly) (interchain with G-Cter in SUMO2).

As to quaternary structure, identified in the spliceosome C complex. Interacts with PPIA/CYPA. Post-translationally, sumoylated.

The protein localises to the nucleus. Pre-mRNA binding protein in vivo, binds avidly to poly(G) and poly(U) RNA homopolymers in vitro. Involved in splicing. Acts as a receptor for carcinoembryonic antigen in Kupffer cells, may initiate a series of signaling events leading to tyrosine phosphorylation of proteins and induction of IL-1 alpha, IL-6, IL-10 and tumor necrosis factor alpha cytokines. The sequence is that of Heterogeneous nuclear ribonucleoprotein M (Hnrnpm) from Mus musculus (Mouse).